Reading from the N-terminus, the 1390-residue chain is Nuclear pore complex protein Nup155 (1390 aa).

Ser-525 carries O-linked (GlcNAc) serine glycosylation. Residues 598–632 (GSPMYSSSPVPTGSPYPNPSSLGTPSHGAQPPTMS) form a disordered region. Lys-739 participates in a covalent cross-link: Glycyl lysine isopeptide (Lys-Gly) (interchain with G-Cter in SUMO2). Residues 984–1011 (QSKAAPQSPSVPKKPGPPVLSSDPNMLS) are disordered. At Ser-1056 the chain carries Phosphoserine.

Belongs to the non-repetitive/WGA-negative nucleoporin family. As to quaternary structure, interacts with GLE1. Able to form a heterotrimer with GLE1 and NUP42 in vitro. Forms a complex with NUP35, NUP93, NUP205 and lamin B. Phosphorylated. Phosphorylation and dephosphorylation may be important for the function of NUP155 and may play a role in the reversible disassembly of the nuclear pore complex during mitosis. Post-translationally, disulfide-linked to NUP62. The inner channel of the NPC has a different redox environment from the cytoplasm and allows the formation of interchain disulfide bonds between some nucleoporins, the significant increase of these linkages upon oxidative stress reduces the permeability of the NPC.

Its subcellular location is the nucleus. The protein resides in the nuclear pore complex. It localises to the nucleus membrane. Its function is as follows. Essential component of nuclear pore complex. Could be essessential for embryogenesis. Nucleoporins may be involved both in binding and translocating proteins during nucleocytoplasmic transport. The protein is Nuclear pore complex protein Nup155 (Nup155) of Rattus norvegicus (Rat).